The chain runs to 295 residues: 4-diphosphocytidyl-2-C-methyl-D-erythritol kinase (295 aa).

The active site involves Lys22. Residue 106–116 (PAGGGFGGGSS) participates in ATP binding. Asp148 is an active-site residue.

Belongs to the GHMP kinase family. IspE subfamily.

The enzyme catalyses 4-CDP-2-C-methyl-D-erythritol + ATP = 4-CDP-2-C-methyl-D-erythritol 2-phosphate + ADP + H(+). It functions in the pathway isoprenoid biosynthesis; isopentenyl diphosphate biosynthesis via DXP pathway; isopentenyl diphosphate from 1-deoxy-D-xylulose 5-phosphate: step 3/6. Its function is as follows. Catalyzes the phosphorylation of the position 2 hydroxy group of 4-diphosphocytidyl-2C-methyl-D-erythritol. This chain is 4-diphosphocytidyl-2-C-methyl-D-erythritol kinase, found in Xanthomonas euvesicatoria pv. vesicatoria (strain 85-10) (Xanthomonas campestris pv. vesicatoria).